A 510-amino-acid polypeptide reads, in one-letter code: Coatomer subunit delta (510 aa).

The MHD domain maps to 270-510 (MESVHMKIEE…TFLVDKYEIL (241 aa)).

The protein belongs to the adaptor complexes medium subunit family. Delta-COP subfamily. As to quaternary structure, oligomeric complex that consists of at least the alpha, beta, beta', gamma, delta, epsilon and zeta subunits.

The protein resides in the cytoplasm. It localises to the golgi apparatus membrane. The protein localises to the cytoplasmic vesicle. Its subcellular location is the COPI-coated vesicle membrane. Its function is as follows. The coatomer is a cytosolic protein complex that binds to dilysine motifs and reversibly associates with Golgi non-clathrin-coated vesicles, which further mediate biosynthetic protein transport from the ER, via the Golgi up to the trans Golgi network. Coatomer complex is required for budding from Golgi membranes, and is essential for the retrograde Golgi-to-ER transport of dilysine-tagged proteins. In mammals, the coatomer can only be recruited by membranes associated to ADP-ribosylation factors (ARFs), which are small GTP-binding proteins; the complex also influences the Golgi structural integrity, as well as the processing, activity, and endocytic recycling of LDL receptors. In Gallus gallus (Chicken), this protein is Coatomer subunit delta (ARCN1).